A 201-amino-acid polypeptide reads, in one-letter code: 3-isopropylmalate dehydratase small subunit (201 aa).

Belongs to the LeuD family. LeuD type 1 subfamily. As to quaternary structure, heterodimer of LeuC and LeuD.

It catalyses the reaction (2R,3S)-3-isopropylmalate = (2S)-2-isopropylmalate. It participates in amino-acid biosynthesis; L-leucine biosynthesis; L-leucine from 3-methyl-2-oxobutanoate: step 2/4. In terms of biological role, catalyzes the isomerization between 2-isopropylmalate and 3-isopropylmalate, via the formation of 2-isopropylmaleate. The sequence is that of 3-isopropylmalate dehydratase small subunit from Roseobacter denitrificans (strain ATCC 33942 / OCh 114) (Erythrobacter sp. (strain OCh 114)).